The following is a 361-amino-acid chain: Septin-12 (361 aa).

The Septin-type G domain maps to 45-316 (MGFEFNIMVV…ENYRIIRLKE (272 aa)). The tract at residues 45–318 (MGFEFNIMVV…YRIIRLKESH (274 aa)) is interaction with SEPTIN7. The tract at residues 55–62 (GQSGLGKS) is G1 motif. GTP-binding positions include 55–62 (GQSGLGKS), T88, G114, 194–202 (RADSLTIEE), G250, and R265. Positions 111-114 (DTPG) are G3 motif. The tract at residues 193 to 196 (ARAD) is G4 motif. Residues 257–361 (VNGRCVLGRK…WAEDNSDEDF (105 aa)) are self-association (via N-terminus) to polymerize octameric septin 12-7-6-2/4-2/4-6-7-12 filaments. Residues 333–361 (PPPAPTGTRASPGPAKMCRWAEDNSDEDF) form a disordered region. Low complexity predominate over residues 338–347 (TGTRASPGPA).

It belongs to the TRAFAC class TrmE-Era-EngA-EngB-Septin-like GTPase superfamily. Septin GTPase family. Septins polymerize into heterooligomeric protein complexes that form filaments, and can associate with cellular membranes, actin filaments and microtubules. GTPase activity is required for filament formation. Interacts with SEPTIN6 and SEPTIN11. Component of a octameric complex consisting of SEPTIN12, SEPTIN7, SEPTIN6 and SEPTIN2 or SEPTIN4 in the order 12-7-6-2-2-6-7-12 or 12-7-6-4-4-6-7-12 and located in the sperm annulus; the octamer polymerizes into filaments via the SEPTIN12 N- and C-termini; the SEPTIN12:SEPTIN7 association is mediated by the GTP-binding domains. Interacts with SPAG4 and LMNB1. Associates with alpha- and beta-tubulins.

The protein localises to the cytoplasm. It localises to the cytoskeleton. Its subcellular location is the spindle. It is found in the cell projection. The protein resides in the cilium. The protein localises to the flagellum. In terms of biological role, filament-forming cytoskeletal GTPase. May play a role in cytokinesis (Potential). Involved in spermatogenesis. Involved in the morphogenesis of sperm heads and the elongation of sperm tails probably implicating the association with alpha- and beta-tubulins. Forms a filamentous structure with SEPTIN7, SEPTIN6, SEPTIN2 and probably SEPTIN4 at the sperm annulus which is required for the structural integrity and motility of the sperm tail during postmeiotic differentiation. The protein is Septin-12 of Bos taurus (Bovine).